A 139-amino-acid polypeptide reads, in one-letter code: Flagellar assembly factor FliW 2 (139 aa).

It belongs to the FliW family. As to quaternary structure, interacts with translational regulator CsrA and flagellin(s).

It localises to the cytoplasm. Functionally, acts as an anti-CsrA protein, binds CsrA and prevents it from repressing translation of its target genes, one of which is flagellin. Binds to flagellin and participates in the assembly of the flagellum. In Helicobacter hepaticus (strain ATCC 51449 / 3B1), this protein is Flagellar assembly factor FliW 2.